The following is a 218-amino-acid chain: Adenylate kinase (218 aa).

10 to 15 (GAGKGT) lines the ATP pocket. The interval 30–59 (STGDMLRAAVKAGTPLGLEAKKVMDAGGLV) is NMP. Residues Thr31, Arg36, 57–59 (GLV), 85–88 (GFPR), and Gln92 contribute to the AMP site. Positions 122 to 159 (ERRVHPASGRSYHVRFNPPKAEGVDDVTGEPLVQRDDD) are LID. ATP contacts are provided by residues Arg123 and 132–133 (SY). The AMP site is built by Arg156 and Arg167. Residue Gly203 participates in ATP binding.

Belongs to the adenylate kinase family. Monomer.

Its subcellular location is the cytoplasm. It carries out the reaction AMP + ATP = 2 ADP. It functions in the pathway purine metabolism; AMP biosynthesis via salvage pathway; AMP from ADP: step 1/1. In terms of biological role, catalyzes the reversible transfer of the terminal phosphate group between ATP and AMP. Plays an important role in cellular energy homeostasis and in adenine nucleotide metabolism. The sequence is that of Adenylate kinase from Bordetella pertussis (strain Tohama I / ATCC BAA-589 / NCTC 13251).